A 258-amino-acid polypeptide reads, in one-letter code: uncharacterized protein (258 aa).

The signal sequence occupies residues 1 to 23 (MVWCHYILLVLTFFLFTTFFTAA). Residues 24–64 (CPAIFTWLNSLFRLSNDSPHVVHTSIAEVGDIEDGRVDKDG) are Cytoplasmic-facing. A helical membrane pass occupies residues 65 to 85 (VLFVDLEFFLGCLPFFFFALV). Over 86–123 (DQSSSSSVCKPLSPSDAKRSSNSLLRLSLVSSNDSDSS) the chain is Extracellular. Asn118 carries an N-linked (GlcNAc...) asparagine glycan. A helical membrane pass occupies residues 124–144 (VSVSTFAFFFFFLFFLFFVFT). Residues 145–230 (CTFSSELTSS…SSSISFRISS (86 aa)) are Cytoplasmic-facing. Residues 231-251 (IFFLCSLVFMWFFNCFSDLNV) form a helical membrane-spanning segment. Topologically, residues 252-258 (LLQIKHS) are extracellular.

It localises to the membrane. This is an uncharacterized protein from Saccharomyces cerevisiae (strain ATCC 204508 / S288c) (Baker's yeast).